Consider the following 393-residue polypeptide: MSAKSNQRGAKAPLLGSKIKLNIEKLAIGGAGVARHEGMVVFVPQAAPNEEILAEITLVKKNFMEARVVEILTASPHRREPPCPVAHTCGGCNWQHITEEEQRRQKHTLVLETIKKFNRDLEFNYLPIQPSPRVLRYRNRIQPKFKNGRFGFFARNSHQIVETMDCLITEETLTDKFAEVKAWAEKKNAKDLQRLEMYIAEEGDVRYGLITDEDDGIGFSQVNRFQNEDLLRTALDWAGDGPYKKVYDLYAGAGNFTFPLAAKYAGSEIIGVELNPKLVERARSKITDKRMTYFMSDVETYMRRASIGKDDLVVLDPPRAGASEYTMQTLAAAQPRKIIYISCHPVSLARDLNWFFAQTQKLGIKYKLDRVQTFEMFPQTDHVETIAELRVDS.

Residues 12 to 70 enclose the TRAM domain; sequence APLLGSKIKLNIEKLAIGGAGVARHEGMVVFVPQAAPNEEILAEITLVKKNFMEARVVE. 4 residues coordinate [4Fe-4S] cluster: C83, C89, C92, and C166. Residues Q221, Y250, E273, and D316 each contribute to the S-adenosyl-L-methionine site. Residue C343 is the Nucleophile of the active site.

This sequence belongs to the class I-like SAM-binding methyltransferase superfamily. RNA M5U methyltransferase family.

This is an uncharacterized protein from Bdellovibrio bacteriovorus (strain ATCC 15356 / DSM 50701 / NCIMB 9529 / HD100).